Reading from the N-terminus, the 162-residue chain is Cyclic pyranopterin monophosphate synthase (162 aa).

Substrate is bound by residues 79–81 (LCH) and 117–118 (ME). The active site involves D132.

Belongs to the MoaC family. In terms of assembly, homohexamer; trimer of dimers.

The enzyme catalyses (8S)-3',8-cyclo-7,8-dihydroguanosine 5'-triphosphate = cyclic pyranopterin phosphate + diphosphate. The protein operates within cofactor biosynthesis; molybdopterin biosynthesis. Catalyzes the conversion of (8S)-3',8-cyclo-7,8-dihydroguanosine 5'-triphosphate to cyclic pyranopterin monophosphate (cPMP). The chain is Cyclic pyranopterin monophosphate synthase from Bordetella petrii (strain ATCC BAA-461 / DSM 12804 / CCUG 43448).